The following is a 426-amino-acid chain: Mitochondrial distribution and morphology protein 12 (426 aa).

The SMP-LTD domain occupies 1-426; it reads MSIEVDWKTA…VFPSFWTFLI (426 aa). Disordered stretches follow at residues 88–147, 185–264, and 346–370; these read AHGN…GTPG, WTDH…FRFP, and ADDQETRDKDDHPRSGLDPTTSPKR. Residues 96 to 109 show a composition bias toward basic and acidic residues; that stretch reads THSELNEPPYRDEV. Positions 216 to 236 are enriched in low complexity; that stretch reads SSNPTSRPSTSSTLPSHPSGS. Basic and acidic residues-rich tracts occupy residues 244–264 and 349–360; these read SHPEEEHLDDPAEPDHPFRFP and QETRDKDDHPRS.

It belongs to the MDM12 family. In terms of assembly, component of the ER-mitochondria encounter structure (ERMES) or MDM complex, composed of mmm1, mdm10, mdm12 and mdm34. A mmm1 homodimer associates with one molecule of mdm12 on each side in a pairwise head-to-tail manner, and the SMP-LTD domains of mmm1 and mdm12 generate a continuous hydrophobic tunnel for phospholipid trafficking.

The protein resides in the mitochondrion outer membrane. Its subcellular location is the endoplasmic reticulum membrane. Component of the ERMES/MDM complex, which serves as a molecular tether to connect the endoplasmic reticulum (ER) and mitochondria. Components of this complex are involved in the control of mitochondrial shape and protein biogenesis, and function in nonvesicular lipid trafficking between the ER and mitochondria. Mdm12 is required for the interaction of the ER-resident membrane protein mmm1 and the outer mitochondrial membrane-resident beta-barrel protein mdm10. The mdm12-mmm1 subcomplex functions in the major beta-barrel assembly pathway that is responsible for biogenesis of all mitochondrial outer membrane beta-barrel proteins, and acts in a late step after the SAM complex. The mdm10-mdm12-mmm1 subcomplex further acts in the TOM40-specific pathway after the action of the mdm12-mmm1 complex. Essential for establishing and maintaining the structure of mitochondria and maintenance of mtDNA nucleoids. The protein is Mitochondrial distribution and morphology protein 12 of Aspergillus terreus (strain NIH 2624 / FGSC A1156).